Here is a 959-residue protein sequence, read N- to C-terminus: Probable transport protein MmpL4 (959 aa).

11 helical membrane passes run 25–45 (FAVPIILVWLAIAVTVSVFIP), 205–225 (VIVILVTLLLVYRSFITVILL), 239–259 (VVALLGHTGLIGLSTFAVNLL), 300–320 (FHVILGSGLTISGATFCLSFA), 333–353 (AVGMLIAVAVALTLGPAVLTV), 381–401 (WPLPILITTCAIAMVGLLALP), 766–786 (WDLVIAGISSLCLIFIIMLII), 790–810 (FVAAAVIVGTVALSLGASFGL), 818–838 (ILGIELHYLVLAMSVIVLLAV), 872–892 (VVTNAGLVFAFTMASMVVSDL), and 902–922 (IGLGLLFDTLIVRSFMMPSIA).

Belongs to the resistance-nodulation-cell division (RND) (TC 2.A.6) family. MmpL subfamily.

It localises to the cell membrane. In Mycobacterium leprae (strain TN), this protein is Probable transport protein MmpL4 (mmpL4).